A 199-amino-acid chain; its full sequence is V-type proton ATPase subunit E (199 aa).

This sequence belongs to the V-ATPase E subunit family.

Produces ATP from ADP in the presence of a proton gradient across the membrane. This Clostridium botulinum (strain Loch Maree / Type A3) protein is V-type proton ATPase subunit E.